The following is a 326-amino-acid chain: Aspartate carbamoyltransferase catalytic subunit (326 aa).

Carbamoyl phosphate contacts are provided by R58 and T59. K86 lines the L-aspartate pocket. The carbamoyl phosphate site is built by R108, H141, and Q144. L-aspartate contacts are provided by R181 and R239. Carbamoyl phosphate-binding residues include G280 and P281.

It belongs to the aspartate/ornithine carbamoyltransferase superfamily. ATCase family. Heterododecamer (2C3:3R2) of six catalytic PyrB chains organized as two trimers (C3), and six regulatory PyrI chains organized as three dimers (R2).

It carries out the reaction carbamoyl phosphate + L-aspartate = N-carbamoyl-L-aspartate + phosphate + H(+). Its pathway is pyrimidine metabolism; UMP biosynthesis via de novo pathway; (S)-dihydroorotate from bicarbonate: step 2/3. Catalyzes the condensation of carbamoyl phosphate and aspartate to form carbamoyl aspartate and inorganic phosphate, the committed step in the de novo pyrimidine nucleotide biosynthesis pathway. The sequence is that of Aspartate carbamoyltransferase catalytic subunit from Synechococcus sp. (strain JA-3-3Ab) (Cyanobacteria bacterium Yellowstone A-Prime).